A 1243-amino-acid polypeptide reads, in one-letter code: MVNWTKEQEEAIYTSGSDILVAAAAGSGKTAVLVERIIQKLLAEHNPTNIDALLVVTFTNAAAQEMRNRVGAALEQALAANPSSIHLKKQLSLLQRASISTLHSFCLDIVKKNAYILDIDPSFRIADDMEMDLLKQEVLDDLLEEWYGDSNPNQDSFFEVVNRFTSDRSDAEMEELIRSLHTFAMQSPWPNQWLDKLVQTYNIPEEWTEEELPWMNVLRDEVSRQLDAVSQEIDIAYSITQEADGPYHYAKTIEEEKAIIQEALKNMESWKYLQQSMLQVKFGKLSGKKVDCDEEKKTKVKKLRDSYKKRFQKMQEVWFARNLDAHVYDMRVLAPVIKHLVELVKQFQDSFAKVKKEKAVVDFSDLEHYCLQILIDESSTEEEVIPSTVAMQLQRQFTEVLVDEYQDTNMVQETILQLISDRQGSGNMFMVGDVKQSIYRFRHAEPSLFIDKYKRFSNSDDPSIRIDLARNFRSRENVLLGANYIFRQLFDEDLGEISYDDAAELIYGNKMYDDHPLEAKPELLLIDNNSEDVEQSDNEETVEDLEKAQIEARAYAKQIKNWIGTPEDEIPMQVVDKATGKQRDLQYKDIVILMRSMTWASTIADELQQQGIPTYADLSTGYFEAIEIKVMLSFLKVIDNPRQDIPLASILRSPIIGLEEDQLASIRLADRKASFYEAVQRYLQNEQDNSDTVKSLIRFMEMLNDFRQSARQGSLSELIWDIYRETGYYDFVGAIPGGKQRQANLRALYDRARGYESTSFRGLYRFLRFIERMEERGKDLGAARALSEQEDVVRIMTIHKSKGLEFPIVILGGMNKEFNQRDLSEKYLLHKDLGFASKYIDPVKRIQYPTLYYHAVRQAKFRDMLSEEIRVLYVALTRAKEKLLMVGTVPSIEKKLEKWQRIVDHPSWVLPAYFRMESKTYLDWVGPALLRHVGSEKIRTENIGNQVLESINQDPSDWQITMNHALDYMDMKDSSMDNDDNLKEKVFNWESVETEQEGLKNDVDARLSYEYAYKQATVFRAKQSVTELKRQQEVKDDYSDQQILPPSHGPIGKRPNFLQKKLKLSPAEKGTALHTVMQHLPMTHVLSEPEIEENIEKMVLEEKLTRMEADSINIRAVERFFHTEIASKIISGNDMHREVPFSIMLPASEVYANWKDQSNEKVLIQGVIDCLLQADTGWIILDYKTDFIEDNPTSQKEQELIHRYQTQMTLYRRAIEQIWKQPVEQTYLYFFSQQLLIEVPYRD.

Residues 2 to 475 (VNWTKEQEEA…IDLARNFRSR (474 aa)) form the UvrD-like helicase ATP-binding domain. 23 to 30 (AAAGSGKT) is an ATP binding site. A UvrD-like helicase C-terminal domain is found at 502 to 803 (AAELIYGNKM…RIMTIHKSKG (302 aa)).

This sequence belongs to the helicase family. AddA subfamily. In terms of assembly, heterodimer of AddA and AddB/RexB. Requires Mg(2+) as cofactor.

It catalyses the reaction Couples ATP hydrolysis with the unwinding of duplex DNA by translocating in the 3'-5' direction.. The enzyme catalyses ATP + H2O = ADP + phosphate + H(+). In terms of biological role, the heterodimer acts as both an ATP-dependent DNA helicase and an ATP-dependent, dual-direction single-stranded exonuclease. Recognizes the chi site generating a DNA molecule suitable for the initiation of homologous recombination. The AddA nuclease domain is required for chi fragment generation; this subunit has the helicase and 3' -&gt; 5' nuclease activities. This chain is ATP-dependent helicase/nuclease subunit A, found in Oceanobacillus iheyensis (strain DSM 14371 / CIP 107618 / JCM 11309 / KCTC 3954 / HTE831).